The following is a 957-amino-acid chain: Melanoma-associated antigen E1 (957 aa).

The interval methionine 1–leucine 433 is disordered. Composition is skewed to polar residues over residues serine 85 to valine 96 and leucine 104 to leucine 130. Positions threonine 138 to proline 156 are enriched in low complexity. 6 stretches are compositionally biased toward polar residues: residues glutamate 158–valine 177, leucine 220–leucine 232, arginine 256–threonine 306, leucine 328–valine 344, arginine 364–valine 380, and threonine 414–lysine 428. MAGE domains are found at residues methionine 491–alanine 690 and leucine 745–alanine 936. Residues serine 743–arginine 957 form an interaction with DTNA region.

As to quaternary structure, interacts with DTNA. Interacts with TRIM28.

It localises to the cytoplasm. Its subcellular location is the perinuclear region. It is found in the nucleus. The protein resides in the cell membrane. In terms of biological role, may enhance ubiquitin ligase activity of RING-type zinc finger-containing E3 ubiquitin-protein ligases. Proposed to act through recruitment and/or stabilization of the Ubl-conjugating enzyme (E2) at the E3:substrate complex. The sequence is that of Melanoma-associated antigen E1 (MAGEE1) from Macaca fascicularis (Crab-eating macaque).